The sequence spans 1046 residues: Translation initiation factor IF-2 (1046 aa).

The disordered stretch occupies residues 49–450 (ALQQGNGGKA…GVMLPRGNGQ (402 aa)). Composition is skewed to low complexity over residues 57-80 (KAAP…ARPA) and 89-106 (PAAA…AAPA). A compositionally biased stretch (pro residues) spans 107-128 (APGPRPGPKPAPRPAPAAPAPA). The span at 129 to 169 (APEFTAPPSAPAAPAAAASGPRPGARPGAPKPGGARPATPG) shows a compositional bias: low complexity. Over residues 177–194 (RGERTDRGDRGDRGDRQG) the composition is skewed to basic and acidic residues. Residues 195–214 (AARPGGQAPRPGARPAGPRP) are compositionally biased toward low complexity. Composition is skewed to gly residues over residues 239–248 (PRPGGAGAPG) and 266–280 (GGPG…GPGG). Residues 302–318 (GNRPNPGMMPQRPAAGP) are compositionally biased toward low complexity. The span at 319 to 414 (RPGGGGPGGR…GTQGAFGRPG (96 aa)) shows a compositional bias: gly residues. The span at 418–427 (RRGRKSKRQR) shows a compositional bias: basic residues. Residues 539–711 (ARPPVVTVMG…VVLTADASLD (173 aa)) enclose the tr-type G domain. Residues 548-555 (GHVDHGKT) form a G1 region. Residue 548-555 (GHVDHGKT) coordinates GTP. The tract at residues 573–577 (GITQH) is G2. The G3 stretch occupies residues 598–601 (DTPG). GTP is bound by residues 598-602 (DTPGH) and 652-655 (NKID). The G4 stretch occupies residues 652–655 (NKID). A G5 region spans residues 688 to 690 (SAK).

Belongs to the TRAFAC class translation factor GTPase superfamily. Classic translation factor GTPase family. IF-2 subfamily.

The protein resides in the cytoplasm. In terms of biological role, one of the essential components for the initiation of protein synthesis. Protects formylmethionyl-tRNA from spontaneous hydrolysis and promotes its binding to the 30S ribosomal subunits. Also involved in the hydrolysis of GTP during the formation of the 70S ribosomal complex. This Streptomyces avermitilis (strain ATCC 31267 / DSM 46492 / JCM 5070 / NBRC 14893 / NCIMB 12804 / NRRL 8165 / MA-4680) protein is Translation initiation factor IF-2.